The chain runs to 187 residues: Elongation factor P (187 aa).

Belongs to the elongation factor P family.

The protein resides in the cytoplasm. Its pathway is protein biosynthesis; polypeptide chain elongation. Involved in peptide bond synthesis. Stimulates efficient translation and peptide-bond synthesis on native or reconstituted 70S ribosomes in vitro. Probably functions indirectly by altering the affinity of the ribosome for aminoacyl-tRNA, thus increasing their reactivity as acceptors for peptidyl transferase. This is Elongation factor P from Flavobacterium psychrophilum (strain ATCC 49511 / DSM 21280 / CIP 103535 / JIP02/86).